Here is a 73-residue protein sequence, read N- to C-terminus: Sec-independent protein translocase protein TatA (73 aa).

A helical membrane pass occupies residues 1–21; it reads MGSFSIWHWMIVLVIVLLVFG.

This sequence belongs to the TatA/E family. As to quaternary structure, the Tat system comprises two distinct complexes: a TatABC complex, containing multiple copies of TatA, TatB and TatC subunits, and a separate TatA complex, containing only TatA subunits. Substrates initially bind to the TatABC complex, which probably triggers association of the separate TatA complex to form the active translocon.

It is found in the cell inner membrane. Its function is as follows. Part of the twin-arginine translocation (Tat) system that transports large folded proteins containing a characteristic twin-arginine motif in their signal peptide across membranes. TatA could form the protein-conducting channel of the Tat system. This is Sec-independent protein translocase protein TatA from Mesorhizobium japonicum (strain LMG 29417 / CECT 9101 / MAFF 303099) (Mesorhizobium loti (strain MAFF 303099)).